A 1257-amino-acid polypeptide reads, in one-letter code: Stromal processing peptidase, chloroplastic (1257 aa).

Residues methionine 1–histidine 142 constitute a chloroplast transit peptide. Histidine 236 contributes to the Zn(2+) binding site. Catalysis depends on glutamate 239, which acts as the Proton acceptor. Histidine 240 is a Zn(2+) binding site. Glutamate 309 is an active-site residue. Residue glutamate 316 coordinates Zn(2+). Residues glutamate 1233 to threonine 1257 form a disordered region.

This sequence belongs to the peptidase M16 family. Zn(2+) serves as cofactor.

The protein resides in the plastid. The protein localises to the chloroplast stroma. Functionally, cleaves presequences (transit peptides) from chloroplastic protein precursors. Initially recognizes a precursor by binding to the C-terminus of its transit peptide and then removes the transit peptide in a single endoproteolytic step. In a next step, pursues the cleavage of transit peptide to a subfragment form. In Pisum sativum (Garden pea), this protein is Stromal processing peptidase, chloroplastic.